The sequence spans 875 residues: DNA topoisomerase 3-beta (875 aa).

Residues 3–153 form the Toprim domain; the sequence is SVLMVAEKPS…QVTYRAHFSA (151 aa). The region spanning 170 to 589 is the Topo IA-type catalytic domain; the sequence is NENEAKSVDA…AIKIFKLKFM (420 aa). The O-(5'-phospho-DNA)-tyrosine intermediate role is filled by Tyr332. The interval 371-391 is disordered; it reads QTPRKGKDAGDHPPITPMKLG.

It belongs to the type IA topoisomerase family.

It carries out the reaction ATP-independent breakage of single-stranded DNA, followed by passage and rejoining.. Releases the supercoiling and torsional tension of DNA introduced during the DNA replication and transcription by transiently cleaving and rejoining one strand of the DNA duplex. Introduces a single-strand break via transesterification at a target site in duplex DNA. The scissile phosphodiester is attacked by the catalytic tyrosine of the enzyme, resulting in the formation of a DNA-(5'-phosphotyrosyl)-enzyme intermediate and the expulsion of a 3'-OH DNA strand. The free DNA strand than undergoes passage around the unbroken strand thus removing DNA supercoils. Finally, in the religation step, the DNA 3'-OH attacks the covalent intermediate to expel the active-site tyrosine and restore the DNA phosphodiester backbone. Weakly relaxes negative supercoils and displays a distinct preference for binding single-stranded DNA. This Drosophila melanogaster (Fruit fly) protein is DNA topoisomerase 3-beta (Top3beta).